Consider the following 173-residue polypeptide: T-cell surface glycoprotein CD3 gamma chain (173 aa).

An N-terminal signal peptide occupies residues 1–22; sequence MEQGKHLAGLILAVFLLQGTMA. The Extracellular portion of the chain corresponds to 23-111; the sequence is HVKEVKVDDN…NCIELNPSTV (89 aa). Residues 24 to 94 enclose the Ig-like domain; sequence VKEVKVDDNR…GSNNQSKSLQ (71 aa). The cysteines at positions 42 and 83 are disulfide-linked. N-linked (GlcNAc...) asparagine glycans are attached at residues Asn45 and Asn88. The helical transmembrane segment at 112–132 threads the bilayer; sequence AGFIFTEIVSIFLLAVGVYFI. Residues 133–173 lie on the Cytoplasmic side of the membrane; that stretch reads AGQEGVRQSRASDKQTLLNNDQLYQPLKEREDDQYSHLRKN. Position 141 is a phosphoserine (Ser141). Residue Ser144 is modified to Phosphoserine; by PKC. In terms of domain architecture, ITAM spans 145–173; that stretch reads DKQTLLNNDQLYQPLKEREDDQYSHLRKN. The Di-leucine motif signature appears at 149-150; that stretch reads LL.

As to quaternary structure, the TCR-CD3 complex is composed of a CD3D/CD3E and a CD3G/CD3E heterodimers that preferentially associate with TCRalpha and TCRbeta, respectively, to form TCRalpha/CD3E/CD3G and TCRbeta/CD3G/CD3E trimers. In turn, the hexamer interacts with CD3Z homodimer to form the TCR-CD3 complex. Alternatively, TCRalpha and TCRbeta can be replaced by TCRgamma and TCRdelta. Phosphorylated on Tyr residues after T-cell receptor triggering by LCK in association with CD4/CD8. Phosphorylated also by PKC; leading to the TCR complex down-regulation. In terms of processing, phosphorylated on Tyr residues after T-cell receptor triggering by LCK in association with CD4/CD8.

Its subcellular location is the cell membrane. Functionally, part of the TCR-CD3 complex present on T-lymphocyte cell surface that plays an essential role in adaptive immune response. When antigen presenting cells (APCs) activate T-cell receptor (TCR), TCR-mediated signals are transmitted across the cell membrane by the CD3 chains CD3D, CD3E, CD3G and CD3Z. All CD3 chains contain immunoreceptor tyrosine-based activation motifs (ITAMs) in their cytoplasmic domain. Upon TCR engagement, these motifs become phosphorylated by Src family protein tyrosine kinases LCK and FYN, resulting in the activation of downstream signaling pathways. In addition to this role of signal transduction in T-cell activation, CD3G plays an essential role in the dynamic regulation of TCR expression at the cell surface. Indeed, constitutive TCR cycling is dependent on the di-leucine-based (diL) receptor-sorting motif present in CD3G. In Bos taurus (Bovine), this protein is T-cell surface glycoprotein CD3 gamma chain (CD3G).